Consider the following 196-residue polypeptide: MGRKKVEIKRIENKSSRQVTFSKRRNGLIEKARQLSILCESSIAVLVVSGSGKLYKSASGDNMSKIIDRYEIHHADELEALDLAEKTRNYLPLKELLEIVQSKLEESNVDNASVDTLISLEEQLETALSVTRARKTELMMGEVKSLQKTENLLREENQTLASQVGKKTFLVIEGDRGMSWENGSGNKVRETLPLLK.

Residues 1–61 (MGRKKVEIKR…GKLYKSASGD (61 aa)) enclose the MADS-box domain. Residues 80 to 170 (ALDLAEKTRN…ASQVGKKTFL (91 aa)) enclose the K-box domain.

In terms of tissue distribution, expressed in most plant tissues, roots, seedlings, leaves, stems, inflorescences, pollen, siliques and flowers.

The protein localises to the nucleus. Functionally, probable transcription factor that prevents vernalization by short periods of cold. Acts as a floral repressor. This is Agamous-like MADS-box protein AGL31 (AGL31) from Arabidopsis thaliana (Mouse-ear cress).